Consider the following 130-residue polypeptide: Small ribosomal subunit protein uS11 (130 aa).

The protein belongs to the universal ribosomal protein uS11 family. As to quaternary structure, part of the 30S ribosomal subunit. Interacts with proteins S7 and S18. Binds to IF-3.

Functionally, located on the platform of the 30S subunit, it bridges several disparate RNA helices of the 16S rRNA. Forms part of the Shine-Dalgarno cleft in the 70S ribosome. In Parasynechococcus marenigrum (strain WH8102), this protein is Small ribosomal subunit protein uS11.